Reading from the N-terminus, the 122-residue chain is Large ribosomal subunit protein bL12 (122 aa).

The protein belongs to the bacterial ribosomal protein bL12 family. As to quaternary structure, homodimer. Part of the ribosomal stalk of the 50S ribosomal subunit. Forms a multimeric L10(L12)X complex, where L10 forms an elongated spine to which 2 to 4 L12 dimers bind in a sequential fashion. Binds GTP-bound translation factors.

Its function is as follows. Forms part of the ribosomal stalk which helps the ribosome interact with GTP-bound translation factors. Is thus essential for accurate translation. This Buchnera aphidicola subsp. Schizaphis graminum (strain Sg) protein is Large ribosomal subunit protein bL12.